Reading from the N-terminus, the 256-residue chain is 5-keto-4-deoxy-D-glucarate aldolase (256 aa).

The active-site Proton acceptor is the H50. Q151 lines the substrate pocket. Residue E153 coordinates Mg(2+). Substrate contacts are provided by S178 and D179. Mg(2+) is bound at residue D179.

This sequence belongs to the HpcH/HpaI aldolase family. KDGluc aldolase subfamily. In terms of assembly, homohexamer; trimer of dimers. Mg(2+) is required as a cofactor.

It carries out the reaction 5-dehydro-4-deoxy-D-glucarate = 2-hydroxy-3-oxopropanoate + pyruvate. The enzyme catalyses 2-dehydro-3-deoxy-D-glucarate = 2-hydroxy-3-oxopropanoate + pyruvate. It functions in the pathway carbohydrate acid metabolism; galactarate degradation; D-glycerate from galactarate: step 2/3. In terms of biological role, catalyzes the reversible retro-aldol cleavage of both 5-keto-4-deoxy-D-glucarate and 2-keto-3-deoxy-D-glucarate to pyruvate and tartronic semialdehyde. The sequence is that of 5-keto-4-deoxy-D-glucarate aldolase from Shigella boydii serotype 4 (strain Sb227).